A 254-amino-acid chain; its full sequence is GPI alpha-1,4-mannosyltransferase I, stabilizing subunit (254 aa).

The signal sequence occupies residues M1–A22. The Lumenal portion of the chain corresponds to D23–L226. N211 carries N-linked (GlcNAc...) asparagine glycosylation. Residues V227–F247 traverse the membrane as a helical segment. Residues K248 to L254 lie on the Cytoplasmic side of the membrane.

The protein belongs to the PIGX family. As to quaternary structure, part of the glycosylphosphatidylinositol-mannosyltransferase I complex that is composed of PIGM and PIGX. Interacts with PIGM; PIGX stabilizes PIGM.

The protein resides in the endoplasmic reticulum membrane. It participates in glycolipid biosynthesis; glycosylphosphatidylinositol-anchor biosynthesis. Stabilizing subunit of the glycosylphosphatidylinositol-mannosyltransferase I complex which catalyzes the transfer of the first mannose, via an alpha-1,4 bond from a dolichol-phosphate-mannose (Dol-P-Man) to the glucosaminyl acyl phosphatidylinositol (GlcN-(acyl)PI) intermediate to generate alpha-D-Man-(1-&gt;4)-alpha-D-GlcN-(1-&gt;6)-(1-radyl,2-acyl-sn-glycero-3-phospho)-2-acyl-inositol and participates in the sixth step of the glycosylphosphatidylinositol-anchor biosynthesis. Probably acts by stabilizing the mannosyltransferase PIGM. This Mus musculus (Mouse) protein is GPI alpha-1,4-mannosyltransferase I, stabilizing subunit.